A 296-amino-acid polypeptide reads, in one-letter code: Nitrogenase iron protein (296 aa).

11–18 (GKGGIGKS) is an ATP binding site. Cysteine 99 is a [4Fe-4S] cluster binding site. Position 102 is an ADP-ribosylarginine; by dinitrogenase reductase ADP-ribosyltransferase (arginine 102). [4Fe-4S] cluster is bound at residue cysteine 134.

Belongs to the NifH/BchL/ChlL family. In terms of assembly, homodimer. [4Fe-4S] cluster is required as a cofactor. The reversible ADP-ribosylation of Arg-102 inactivates the nitrogenase reductase and regulates nitrogenase activity.

The catalysed reaction is N2 + 8 reduced [2Fe-2S]-[ferredoxin] + 16 ATP + 16 H2O = H2 + 8 oxidized [2Fe-2S]-[ferredoxin] + 2 NH4(+) + 16 ADP + 16 phosphate + 6 H(+). The key enzymatic reactions in nitrogen fixation are catalyzed by the nitrogenase complex, which has 2 components: the iron protein and the molybdenum-iron protein. The sequence is that of Nitrogenase iron protein from Dechloromonas aromatica (strain RCB).